The following is a 366-amino-acid chain: Ferrochelatase (366 aa).

Fe cation is bound by residues histidine 210 and glutamate 293.

It belongs to the ferrochelatase family.

It is found in the cytoplasm. It carries out the reaction heme b + 2 H(+) = protoporphyrin IX + Fe(2+). Its pathway is porphyrin-containing compound metabolism; protoheme biosynthesis; protoheme from protoporphyrin-IX: step 1/1. Functionally, catalyzes the ferrous insertion into protoporphyrin IX. This chain is Ferrochelatase, found in Leptospira borgpetersenii serovar Hardjo-bovis (strain JB197).